Consider the following 83-residue polypeptide: Sec-independent protein translocase protein TatA (83 aa).

The chain crosses the membrane as a helical span at residues 1-21 (MGNMGIWQLLIIAVIVILLFG). 2 stretches are compositionally biased toward basic and acidic residues: residues 47–57 (EEKKALEETAS) and 71–83 (AEKKTETKDKEQV). The tract at residues 47 to 83 (EEKKALEETASEKATPSVEKTAPNAEKKTETKDKEQV) is disordered.

Belongs to the TatA/E family. The Tat system comprises two distinct complexes: a TatABC complex, containing multiple copies of TatA, TatB and TatC subunits, and a separate TatA complex, containing only TatA subunits. Substrates initially bind to the TatABC complex, which probably triggers association of the separate TatA complex to form the active translocon.

The protein localises to the cell inner membrane. Functionally, part of the twin-arginine translocation (Tat) system that transports large folded proteins containing a characteristic twin-arginine motif in their signal peptide across membranes. TatA could form the protein-conducting channel of the Tat system. The polypeptide is Sec-independent protein translocase protein TatA (Shewanella woodyi (strain ATCC 51908 / MS32)).